A 408-amino-acid chain; its full sequence is MSAPKKVVLAYSGGLDTSIILKWLQTEYGCEVVTFTADLGQGEELEPAREKAVMLGIKPDNIFIEDVREEFVRDFVFPMFRANALYEGLYLLGTSIARPLIAKRLVEIAAMTGADAVAHGATGKGNDQVRFELTAYALDPAIKVIAPWREWDLTSRTRLIEFAEQNQIPIAKNKRGEAPFSVDANLLHTSSEGRVLENPGEEAPDYVYQRTVDPEKAPDTPEFVEITFEKGDAVAINGEAMSPATILTRLNELGGKHGVGRLDLVENRFVGMKSRGIYETPGGTILLEAHRGIEQITLDSGAGHLKDSIMPRYAELIYNGFWYSPEREMLQALIDKSQEHVSGTVRVKLYKGFARTVARWSDHSLYSEKHVTFEEDAGAYDQKDAAGFIRLNALRLKLIATRNARVKG.

Residues 10 to 18 (AYSGGLDTS) and Ala-37 contribute to the ATP site. 2 residues coordinate L-citrulline: Tyr-90 and Ser-95. Gly-120 is a binding site for ATP. The L-aspartate site is built by Thr-122, Asn-126, and Asp-127. Asn-126 lines the L-citrulline pocket. L-citrulline contacts are provided by Arg-130, Ser-181, Ser-190, Glu-266, and Tyr-278.

The protein belongs to the argininosuccinate synthase family. Type 1 subfamily. Homotetramer.

Its subcellular location is the cytoplasm. It catalyses the reaction L-citrulline + L-aspartate + ATP = 2-(N(omega)-L-arginino)succinate + AMP + diphosphate + H(+). It participates in amino-acid biosynthesis; L-arginine biosynthesis; L-arginine from L-ornithine and carbamoyl phosphate: step 2/3. This chain is Argininosuccinate synthase, found in Cereibacter sphaeroides (strain ATCC 17025 / ATH 2.4.3) (Rhodobacter sphaeroides).